The primary structure comprises 94 residues: Cell division protein FtsB (94 aa).

The Cytoplasmic segment spans residues 1 to 3 (MRV). The chain crosses the membrane as a helical span at residues 4–21 (FALTLSLLLVWLLYTLMW). At 22–94 (GKNGVMDFRA…YRIIGEESRQ (73 aa)) the chain is on the periplasmic side. Residues 33 to 76 (QAEIEVQQQVNANLHLRNQEMFAEIDDLRQGLDAIEERARNELG) are a coiled coil.

The protein belongs to the FtsB family. Part of a complex composed of FtsB, FtsL and FtsQ.

It is found in the cell inner membrane. Functionally, essential cell division protein. May link together the upstream cell division proteins, which are predominantly cytoplasmic, with the downstream cell division proteins, which are predominantly periplasmic. This Vibrio cholerae serotype O1 (strain ATCC 39315 / El Tor Inaba N16961) protein is Cell division protein FtsB.